The primary structure comprises 305 residues: 17-beta-hydroxysteroid dehydrogenase type 3 (305 aa).

Residue 44-73 (GQWAVITGAGDGIGKAYSFELARHGLNVVL) participates in NADP(+) binding. S181 provides a ligand contact to substrate. The active-site Proton acceptor is Y194.

The protein belongs to the short-chain dehydrogenases/reductases (SDR) family. 17-beta-HSD 3 subfamily. In terms of tissue distribution, expressed in the testes.

The protein localises to the endoplasmic reticulum. It catalyses the reaction a 17beta-hydroxy steroid + NADP(+) = a 17-oxo steroid + NADPH + H(+). It carries out the reaction testosterone + NADP(+) = androst-4-ene-3,17-dione + NADPH + H(+). The enzyme catalyses 17beta-estradiol + NADP(+) = estrone + NADPH + H(+). The catalysed reaction is 3beta-hydroxyandrost-5-en-17-one + NADPH + H(+) = androst-5-en-3beta,17beta-diol + NADP(+). It catalyses the reaction 17beta-hydroxy-5alpha-androstan-3-one + NADP(+) = 5alpha-androstan-3,17-dione + NADPH + H(+). It carries out the reaction androsterone + NADPH + H(+) = 5alpha-androstane-3alpha,17beta-diol + NADP(+). The enzyme catalyses 3beta-hydroxy-5alpha-androstan-17-one + NADPH + H(+) = 5alpha-androstane-3beta,17beta-diol + NADP(+). The catalysed reaction is androst-4-ene-3,11,17-trione + NADPH + H(+) = 17beta-hydroxyandrost-4-ene-3,11-dione + NADP(+). It catalyses the reaction 11beta-hydroxyandrost-4-ene-3,17-dione + NADPH + H(+) = 11beta,17beta-dihydroxyandrost-4-ene-3-one + NADP(+). It functions in the pathway hormone biosynthesis; testosterone biosynthesis. It participates in steroid metabolism. Catalyzes the conversion of 17-oxosteroids to 17beta-hydroxysteroids. Favors the reduction of androstenedione to testosterone. Testosterone is the key androgen driving male development and function. Uses NADPH while the two other EDH17B enzymes use NADH. Androgens such as epiandrosterone, dehydroepiandrosterone, androsterone and androstanedione are accepted as substrates and reduced at C-17. Can reduce 11-ketoandrostenedione as well as 11beta-hydroxyandrostenedione at C-17 to the respective testosterone forms. Plays a role in the rate-limiting-step for the maximum level of testosterone production by the testis but does not affect basal testosterone production. This is 17-beta-hydroxysteroid dehydrogenase type 3 from Mus musculus (Mouse).